An 864-amino-acid chain; its full sequence is Probable LRR receptor-like serine/threonine-protein kinase At1g07550 (864 aa).

The first 23 residues, 1-23, serve as a signal peptide directing secretion; sequence MDTCTRLLFAACATLSILHLVQS. The Extracellular segment spans residues 24–507; the sequence is QNQQGFISLD…SCGTRFPTAA (484 aa). 7 N-linked (GlcNAc...) asparagine glycosylation sites follow: asparagine 49, asparagine 229, asparagine 256, asparagine 289, asparagine 432, asparagine 445, and asparagine 464. LRR repeat units lie at residues 411-434, 435-457, and 459-480; these read RIVK…QNLT, QLQE…LAKM, and YLLV…ALLD. Residues 508-528 traverse the membrane as a helical segment; sequence VAASVSAVAIIILVLVLIFVL. Topologically, residues 529 to 864 are cytoplasmic; the sequence is RRRKPSAGKV…VDTEINPKAR (336 aa). Threonine 551 carries the post-translational modification Phosphothreonine. One can recognise a Protein kinase domain in the interval 560–831; the sequence is NNFQVVIGKG…QVVHVLNECL (272 aa). ATP is bound by residues 566–574 and lysine 587; that span reads IGKGGFGVV. Tyrosine 632 carries the phosphotyrosine modification. Aspartate 684 functions as the Proton acceptor in the catalytic mechanism. A phosphothreonine mark is found at threonine 718 and threonine 723. A Phosphotyrosine modification is found at tyrosine 731.

This sequence belongs to the protein kinase superfamily. Ser/Thr protein kinase family.

Its subcellular location is the membrane. The enzyme catalyses L-seryl-[protein] + ATP = O-phospho-L-seryl-[protein] + ADP + H(+). It catalyses the reaction L-threonyl-[protein] + ATP = O-phospho-L-threonyl-[protein] + ADP + H(+). The protein is Probable LRR receptor-like serine/threonine-protein kinase At1g07550 of Arabidopsis thaliana (Mouse-ear cress).